The primary structure comprises 264 residues: Thymidylate synthase (264 aa).

Arg-21 is a binding site for dUMP. His-51 contributes to the (6R)-5,10-methylene-5,6,7,8-tetrahydrofolate binding site. DUMP is bound at residue Arg-126 to Arg-127. Cys-146 serves as the catalytic Nucleophile. DUMP-binding positions include Arg-166–Asp-169, Asn-177, and His-207–Tyr-209. (6R)-5,10-methylene-5,6,7,8-tetrahydrofolate is bound at residue Asp-169. Ser-263 contributes to the (6R)-5,10-methylene-5,6,7,8-tetrahydrofolate binding site.

The protein belongs to the thymidylate synthase family. Bacterial-type ThyA subfamily. In terms of assembly, homodimer.

It localises to the cytoplasm. It carries out the reaction dUMP + (6R)-5,10-methylene-5,6,7,8-tetrahydrofolate = 7,8-dihydrofolate + dTMP. The protein operates within pyrimidine metabolism; dTTP biosynthesis. Catalyzes the reductive methylation of 2'-deoxyuridine-5'-monophosphate (dUMP) to 2'-deoxythymidine-5'-monophosphate (dTMP) while utilizing 5,10-methylenetetrahydrofolate (mTHF) as the methyl donor and reductant in the reaction, yielding dihydrofolate (DHF) as a by-product. This enzymatic reaction provides an intracellular de novo source of dTMP, an essential precursor for DNA biosynthesis. This Bacillus pumilus (strain SAFR-032) protein is Thymidylate synthase.